Consider the following 124-residue polypeptide: Small ribosomal subunit protein bS16 (124 aa).

The disordered stretch occupies residues 82-124 (LAKRPARSNPTKAVPGKKAQERAAEAKQKAEDAAAAAAESAAE). A compositionally biased stretch (basic and acidic residues) spans 99-113 (KAQERAAEAKQKAED). Residues 114 to 124 (AAAAAAESAAE) are compositionally biased toward low complexity.

The protein belongs to the bacterial ribosomal protein bS16 family.

This is Small ribosomal subunit protein bS16 from Sinorhizobium fredii (strain NBRC 101917 / NGR234).